Here is a 273-residue protein sequence, read N- to C-terminus: MNRQVIEFSKYNPSGNMTILVHSKHDASEYASIANQLMAATHVCCEQVGFIESTQNDDGNDFHLVMSGNEFCGNATMSYIHHLQESHLLKDQQFKVKVSGCSDLVQCAIHDCQYYEVQMPQAHRVVPTTINMGNHSWKALEIIYETYVHYVIPVKQVTTEIQHLVEAFVREQQWSHKYKTVGMMLFDEQRQFLQPLIYIPEIQSLIWENSCGSGTASIGVFNNYQRNDACKDFTVHQPGGSILVTSKRCHQLGYQTSIKGQVTTVATGKAYIE.

C72 functions as the Proton acceptor in the catalytic mechanism. The active-site Proton donor is C211.

Belongs to the histidine racemase family. As to quaternary structure, homodimer.

The protein localises to the cytoplasm. It carries out the reaction L-histidine = D-histidine. In terms of biological role, isomerase that catalyzes the conversion of L-histidine to D-histidine. Functions the biosynthesis of the metallophore staphylopine, which is involved in the acquisition of nickel, cobalt, zinc, copper, and iron, and thus enables bacterial growth inside the host, where metal access is limited. Therefore, this enzyme probably contributes to staphylococcal virulence. The reaction is reversible in vitro, the enzyme can produce D-histidine from the L-stereoisomer and vice versa. Appears to be specific for histidine as it cannot use other amino acids as substrate, including L-alanine and L-methionine. The sequence is that of Histidine racemase from Staphylococcus aureus (strain Mu50 / ATCC 700699).